A 268-amino-acid polypeptide reads, in one-letter code: 3-methyl-2-oxobutanoate hydroxymethyltransferase (268 aa).

Mg(2+)-binding residues include D44 and D83. Residues 44-45 (DS), D83, and K113 contribute to the 3-methyl-2-oxobutanoate site. Residue E115 coordinates Mg(2+). Residue E182 is the Proton acceptor of the active site.

Belongs to the PanB family. Homodecamer; pentamer of dimers. Mg(2+) serves as cofactor.

The protein localises to the cytoplasm. It carries out the reaction 3-methyl-2-oxobutanoate + (6R)-5,10-methylene-5,6,7,8-tetrahydrofolate + H2O = 2-dehydropantoate + (6S)-5,6,7,8-tetrahydrofolate. Its pathway is cofactor biosynthesis; (R)-pantothenate biosynthesis; (R)-pantoate from 3-methyl-2-oxobutanoate: step 1/2. In terms of biological role, catalyzes the reversible reaction in which hydroxymethyl group from 5,10-methylenetetrahydrofolate is transferred onto alpha-ketoisovalerate to form ketopantoate. This is 3-methyl-2-oxobutanoate hydroxymethyltransferase from Synechococcus elongatus (strain ATCC 33912 / PCC 7942 / FACHB-805) (Anacystis nidulans R2).